Reading from the N-terminus, the 60-residue chain is Large ribosomal subunit protein uL30 (60 aa).

It belongs to the universal ribosomal protein uL30 family. As to quaternary structure, part of the 50S ribosomal subunit.

This Streptomyces griseus subsp. griseus (strain JCM 4626 / CBS 651.72 / NBRC 13350 / KCC S-0626 / ISP 5235) protein is Large ribosomal subunit protein uL30.